We begin with the raw amino-acid sequence, 433 residues long: Glutamate-1-semialdehyde 2,1-aminomutase (433 aa).

K273 bears the N6-(pyridoxal phosphate)lysine mark.

The protein belongs to the class-III pyridoxal-phosphate-dependent aminotransferase family. HemL subfamily. Homodimer. Requires pyridoxal 5'-phosphate as cofactor.

The protein resides in the cytoplasm. It carries out the reaction (S)-4-amino-5-oxopentanoate = 5-aminolevulinate. It participates in porphyrin-containing compound metabolism; protoporphyrin-IX biosynthesis; 5-aminolevulinate from L-glutamyl-tRNA(Glu): step 2/2. The protein is Glutamate-1-semialdehyde 2,1-aminomutase of Ralstonia pickettii (strain 12J).